The primary structure comprises 469 residues: Neuraminidase (469 aa).

The Intravirion segment spans residues 1-6; it reads MNTNQR. A helical transmembrane segment spans residues 7–27; the sequence is IITIGTICLIVGIISLLLQIG. Positions 11–33 are involved in apical transport and lipid raft association; it reads GTICLIVGIISLLLQIGNIISLW. Over 28–469 the chain is Virion surface; it reads NIISLWISHS…GADLPFTIDK (442 aa). The interval 36 to 90 is hypervariable stalk region; that stretch reads HSIQTREKSHPEVCNQSIITYENNTWVNQTYVNISNANIVAEQGVTSIILAGNSS. N-linked (GlcNAc...) asparagine; by host glycans are attached at residues Asn-50, Asn-58, Asn-63, Asn-68, and Asn-88. A head of neuraminidase region spans residues 91–469; it reads LCPISGWAIY…GADLPFTIDK (379 aa). 8 cysteine pairs are disulfide-bonded: Cys-92–Cys-417, Cys-124–Cys-129, Cys-184–Cys-231, Cys-233–Cys-238, Cys-279–Cys-292, Cys-281–Cys-290, Cys-318–Cys-335, and Cys-421–Cys-446. Arg-118 contacts substrate. A glycan (N-linked (GlcNAc...) asparagine; by host) is linked at Asn-146. Catalysis depends on Asp-151, which acts as the Proton donor/acceptor. Arg-152 is a substrate binding site. Asn-235 carries an N-linked (GlcNAc...) asparagine; by host glycan. 277–278 serves as a coordination point for substrate; it reads EE. Substrate is bound at residue Arg-293. Asp-294, Asp-324, and Asn-344 together coordinate Ca(2+). Arg-368 provides a ligand contact to substrate. Catalysis depends on Tyr-402, which acts as the Nucleophile. N-linked (GlcNAc...) asparagine; by host glycosylation is present at Asn-454.

It belongs to the glycosyl hydrolase 34 family. Homotetramer. Requires Ca(2+) as cofactor. Post-translationally, N-glycosylated.

Its subcellular location is the virion membrane. The protein localises to the host apical cell membrane. It carries out the reaction Hydrolysis of alpha-(2-&gt;3)-, alpha-(2-&gt;6)-, alpha-(2-&gt;8)- glycosidic linkages of terminal sialic acid residues in oligosaccharides, glycoproteins, glycolipids, colominic acid and synthetic substrates.. Inhibited by the neuraminidase inhibitors zanamivir (Relenza) and oseltamivir (Tamiflu). These drugs interfere with the release of progeny virus from infected cells and are effective against all influenza strains. Resistance to neuraminidase inhibitors is quite rare. Functionally, catalyzes the removal of terminal sialic acid residues from viral and cellular glycoconjugates. Cleaves off the terminal sialic acids on the glycosylated HA during virus budding to facilitate virus release. Additionally helps virus spread through the circulation by further removing sialic acids from the cell surface. These cleavages prevent self-aggregation and ensure the efficient spread of the progeny virus from cell to cell. Otherwise, infection would be limited to one round of replication. Described as a receptor-destroying enzyme because it cleaves a terminal sialic acid from the cellular receptors. May facilitate viral invasion of the upper airways by cleaving the sialic acid moieties on the mucin of the airway epithelial cells. Likely to plays a role in the budding process through its association with lipid rafts during intracellular transport. May additionally display a raft-association independent effect on budding. Plays a role in the determination of host range restriction on replication and virulence. Sialidase activity in late endosome/lysosome traffic seems to enhance virus replication. This chain is Neuraminidase, found in Aves (Human).